The chain runs to 287 residues: MDPKQTTLLCLVLCLGQRIQAQEGDFPMPFISAKSSPVIPLDGSVKIQCQAIREAYLTQLMIIKNSTYREIGRRLKFWNETDPEFVIDHMDANKAGRYQCQYRIGHYRFRYSDTLELVVTGLYGKPFLSADRGLVLMPGENISLTCSSAHIPFDRFSLAKEGELSLPQHQSGEHPANFSLGPVDLNVSGIYRCYGWYNRSPYLWSFPSNALELVVTDSIHQDYTTQNLIRMAVAGLVLVALLAILVENWHSHTALNKEASADVAEPSWSQQMCQPGLTFARTPSVCK.

The first 21 residues, 1–21 (MDPKQTTLLCLVLCLGQRIQA), serve as a signal peptide directing secretion. At 22–227 (QEGDFPMPFI…SIHQDYTTQN (206 aa)) the chain is on the extracellular side. 2 consecutive Ig-like C2-type domains span residues 42–107 (DGSV…IGHY) and 139–200 (GENI…YNRS). A disulfide bridge links cysteine 49 with cysteine 100. 5 N-linked (GlcNAc...) asparagine glycosylation sites follow: asparagine 65, asparagine 79, asparagine 141, asparagine 177, and asparagine 186. Cysteine 146 and cysteine 193 are oxidised to a cystine. A helical transmembrane segment spans residues 228–246 (LIRMAVAGLVLVALLAILV). At 247-287 (ENWHSHTALNKEASADVAEPSWSQQMCQPGLTFARTPSVCK) the chain is on the cytoplasmic side.

As to quaternary structure, associates with the Fc epsilon RI gamma 2 receptor inducing tyrosine phosphorylation of gamma 2. (Microbial infection) Interacts with Staphylococcus aureus protein SSL11. As to expression, isoform A.1, isoform A.2 and isoform A.3 are differentially expressed between blood and mucosal myeloid cells. Isoform A.1, isoform A.2 and isoform A.3 are expressed in monocytes. Isoform A.1 and isoform A.2 are expressed in alveolar macrophages; however only one isoform is expressed at alveolar macrophages surfaces.

It is found in the cell membrane. The protein localises to the secreted. Functionally, binds to the Fc region of immunoglobulins alpha. Mediates several functions including cytokine production. The polypeptide is Immunoglobulin alpha Fc receptor (FCAR) (Homo sapiens (Human)).